The chain runs to 123 residues: Ferredoxin-5 (123 aa).

The region spanning 2 to 119 (PNITFTSPIM…DVMVHFTGTP (118 aa)) is the 2Fe-2S ferredoxin-type domain. Residues C42, C47, C50, and C102 each coordinate [2Fe-2S] cluster.

Belongs to the 2Fe2S plant-type ferredoxin family. The cofactor is [2Fe-2S] cluster.

Its function is as follows. Ferredoxins are iron-sulfur proteins that transfer electrons in a wide variety of metabolic reactions. This ferredoxin probably participates in nitrogen fixation. The protein is Ferredoxin-5 (fdxD) of Rhodobacter capsulatus (Rhodopseudomonas capsulata).